A 197-amino-acid polypeptide reads, in one-letter code: Dephospho-CoA kinase (197 aa).

The DPCK domain occupies 2-197 (IIGITGGIAS…SALLSLANPR (196 aa)). Residue 10–15 (ASGKST) coordinates ATP.

This sequence belongs to the CoaE family.

It is found in the cytoplasm. It catalyses the reaction 3'-dephospho-CoA + ATP = ADP + CoA + H(+). Its pathway is cofactor biosynthesis; coenzyme A biosynthesis; CoA from (R)-pantothenate: step 5/5. Functionally, catalyzes the phosphorylation of the 3'-hydroxyl group of dephosphocoenzyme A to form coenzyme A. This chain is Dephospho-CoA kinase, found in Streptococcus pyogenes serotype M3 (strain ATCC BAA-595 / MGAS315).